Reading from the N-terminus, the 571-residue chain is Urease subunit alpha (571 aa).

Residues 129 to 571 (GGIDTHIHFI…LPMAQRYFLF (443 aa)) form the Urease domain. 3 residues coordinate Ni(2+): His-134, His-136, and Lys-217. Lys-217 carries the post-translational modification N6-carboxylysine. His-219 provides a ligand contact to substrate. Ni(2+) is bound by residues His-246 and His-272. The active-site Proton donor is His-320. Residue Asp-360 participates in Ni(2+) binding.

It belongs to the metallo-dependent hydrolases superfamily. Urease alpha subunit family. As to quaternary structure, heterotrimer of UreA (gamma), UreB (beta) and UreC (alpha) subunits. Three heterotrimers associate to form the active enzyme. The cofactor is Ni cation. In terms of processing, carboxylation allows a single lysine to coordinate two nickel ions.

Its subcellular location is the cytoplasm. It carries out the reaction urea + 2 H2O + H(+) = hydrogencarbonate + 2 NH4(+). It functions in the pathway nitrogen metabolism; urea degradation; CO(2) and NH(3) from urea (urease route): step 1/1. The protein is Urease subunit alpha of Cupriavidus pinatubonensis (strain JMP 134 / LMG 1197) (Cupriavidus necator (strain JMP 134)).